An 833-amino-acid polypeptide reads, in one-letter code: Leucine--tRNA ligase (833 aa).

The 'HIGH' region motif lies at 41–52; it reads PYPSGAGLHVGH. Positions 610 to 614 match the 'KMSKS' region motif; that stretch reads KMSKS. Lysine 613 provides a ligand contact to ATP.

The protein belongs to the class-I aminoacyl-tRNA synthetase family.

The protein resides in the cytoplasm. It carries out the reaction tRNA(Leu) + L-leucine + ATP = L-leucyl-tRNA(Leu) + AMP + diphosphate. The protein is Leucine--tRNA ligase of Streptococcus pneumoniae (strain ATCC 700669 / Spain 23F-1).